A 253-amino-acid polypeptide reads, in one-letter code: tRNA (guanine-N(7)-)-methyltransferase (253 aa).

Residues 1 to 12 are compositionally biased toward pro residues; sequence MSQTPMPQPDQA. The tract at residues 1–39 is disordered; sequence MSQTPMPQPDQAPPVDVGQPVDEAEAKRRRFKTHGRKKG. Positions 27–39 are enriched in basic residues; the sequence is KRRRFKTHGRKKG. Glutamate 84, aspartate 109, asparagine 136, and aspartate 159 together coordinate S-adenosyl-L-methionine. The active site involves aspartate 159. Substrate-binding positions include lysine 163, aspartate 195, and 232 to 235; that span reads TNFE.

It belongs to the class I-like SAM-binding methyltransferase superfamily. TrmB family.

It carries out the reaction guanosine(46) in tRNA + S-adenosyl-L-methionine = N(7)-methylguanosine(46) in tRNA + S-adenosyl-L-homocysteine. Its pathway is tRNA modification; N(7)-methylguanine-tRNA biosynthesis. Catalyzes the formation of N(7)-methylguanine at position 46 (m7G46) in tRNA. The polypeptide is tRNA (guanine-N(7)-)-methyltransferase (Magnetococcus marinus (strain ATCC BAA-1437 / JCM 17883 / MC-1)).